Reading from the N-terminus, the 415-residue chain is Histidine--tRNA ligase (415 aa).

It belongs to the class-II aminoacyl-tRNA synthetase family. Homodimer.

The protein localises to the cytoplasm. The catalysed reaction is tRNA(His) + L-histidine + ATP = L-histidyl-tRNA(His) + AMP + diphosphate + H(+). This Rickettsia bellii (strain RML369-C) protein is Histidine--tRNA ligase.